We begin with the raw amino-acid sequence, 421 residues long: Acyl-coenzyme A thioesterase 5 (421 aa).

Catalysis depends on charge relay system residues S232, D326, and H360. Residues 419 to 421 (AKL) carry the Microbody targeting signal motif.

Belongs to the C/M/P thioester hydrolase family. Highly expressed in spleen, brain, testis and proximal and distal intestine; expressed at low level in the liver.

Its subcellular location is the peroxisome. The catalysed reaction is hexadecanoyl-CoA + H2O = hexadecanoate + CoA + H(+). It carries out the reaction decanoyl-CoA + H2O = decanoate + CoA + H(+). It catalyses the reaction octanoyl-CoA + H2O = octanoate + CoA + H(+). The enzyme catalyses dodecanoyl-CoA + H2O = dodecanoate + CoA + H(+). The catalysed reaction is tetradecanoyl-CoA + H2O = tetradecanoate + CoA + H(+). It carries out the reaction octadecanoyl-CoA + H2O = octadecanoate + CoA + H(+). It catalyses the reaction eicosanoyl-CoA + H2O = eicosanoate + CoA + H(+). The enzyme catalyses (9Z)-octadecenoyl-CoA + H2O = (9Z)-octadecenoate + CoA + H(+). The catalysed reaction is (9Z,12Z)-octadecadienoyl-CoA + H2O = (9Z,12Z)-octadecadienoate + CoA + H(+). It carries out the reaction (5Z,8Z,11Z,14Z)-eicosatetraenoyl-CoA + H2O = (5Z,8Z,11Z,14Z)-eicosatetraenoate + CoA + H(+). It catalyses the reaction (9Z)-hexadecenoyl-CoA + H2O = (9Z)-hexadecenoate + CoA + H(+). It participates in lipid metabolism; fatty acid metabolism. In terms of biological role, catalyzes the hydrolysis of acyl-CoAs into free fatty acids and coenzyme A (CoASH), regulating their respective intracellular levels. Mainly active on medium-chain acyl-CoAs. Seems to be involved in intraperoxisomal regulation of acyl-CoA levels, but not CoASH levels. May have a function in termination of beta-oxidation of fatty acids. The sequence is that of Acyl-coenzyme A thioesterase 5 (Acot5) from Mus musculus (Mouse).